A 95-amino-acid chain; its full sequence is Protein TusB (95 aa).

This sequence belongs to the DsrH/TusB family. In terms of assembly, heterohexamer, formed by a dimer of trimers. The hexameric TusBCD complex contains 2 copies each of TusB, TusC and TusD. The TusBCD complex interacts with TusE.

The protein localises to the cytoplasm. In terms of biological role, part of a sulfur-relay system required for 2-thiolation of 5-methylaminomethyl-2-thiouridine (mnm(5)s(2)U) at tRNA wobble positions. This chain is Protein TusB, found in Serratia proteamaculans (strain 568).